The chain runs to 224 residues: Transcription factor MYB1 (224 aa).

2 consecutive HTH myb-type domains span residues 10 to 66 and 67 to 117; these read LGRV…KPSI and KRGH…YKKH. 2 consecutive DNA-binding regions (H-T-H motif) follow at residues 38-62 and 90-113; these read WKRV…LNYL and WSLI…NTHL.

Its subcellular location is the nucleus. Its function is as follows. Activates DODA1 and CYP76AD1 in the betalain red pigment pathway. This Beta vulgaris (Sugar beet) protein is Transcription factor MYB1.